The sequence spans 237 residues: Ribosomal RNA small subunit methyltransferase G (237 aa).

S-adenosyl-L-methionine contacts are provided by residues Gly-72, Leu-77, 123–124 (AE), and Arg-138. The disordered stretch occupies residues 210-237 (TALETGTKAAPSRSPRKPGGRKKRGRKR). Residues 223–237 (SPRKPGGRKKRGRKR) are compositionally biased toward basic residues.

The protein belongs to the methyltransferase superfamily. RNA methyltransferase RsmG family.

Its subcellular location is the cytoplasm. Specifically methylates the N7 position of guanine in position 518 of 16S rRNA. This chain is Ribosomal RNA small subunit methyltransferase G, found in Thermobifida fusca (strain YX).